A 127-amino-acid polypeptide reads, in one-letter code: Histone H2B type 1-A (127 aa).

P2 carries the N-acetylproline modification. 7 positions are modified to N6-acetyllysine; alternate: K7, K13, K14, K17, K18, K22, and K25. An N6-crotonyllysine; alternate mark is found at K7, K13, K14, K17, K18, K22, K25, and K36. Residues K7 and K13 each carry the N6-lactoyllysine; alternate modification. K7 participates in a covalent cross-link: Glycyl lysine isopeptide (Lys-Gly) (interchain with G-Cter in SUMO2); alternate. An N6-lactoyllysine; alternate mark is found at K17, K18, K22, and K25. Residue K22 forms a Glycyl lysine isopeptide (Lys-Gly) (interchain with G-Cter in SUMO2); alternate linkage. An N6-succinyllysine; alternate modification is found at K36. K36 participates in a covalent cross-link: Glycyl lysine isopeptide (Lys-Gly) (interchain with G-Cter in ubiquitin); alternate. Phosphoserine is present on S38. K45 carries the post-translational modification N6-lactoyllysine; alternate. Position 48 is an N6-methyllysine (K48). An N6,N6-dimethyllysine modification is found at K59. R81 is modified (dimethylated arginine). Position 87 is an N6-acetyllysine; alternate (K87). K87 is subject to N6-lactoyllysine; alternate. An N6,N6,N6-trimethyllysine; alternate modification is found at K87. Omega-N-methylarginine occurs at positions 88 and 94. At K110 the chain carries N6-lactoyllysine; alternate. At K110 the chain carries N6-methyllysine. T117 carries the phosphothreonine modification. N6-lactoyllysine; alternate is present on residues K118 and K122. K118 and K122 each carry N6-succinyllysine; alternate. Position 118 is an N6-methylated lysine; alternate (K118). K122 participates in a covalent cross-link: Glycyl lysine isopeptide (Lys-Gly) (interchain with G-Cter in ubiquitin); alternate.

The protein belongs to the histone H2B family. The nucleosome is a histone octamer containing two molecules each of H2A, H2B, H3 and H4 assembled in one H3-H4 heterotetramer and two H2A-H2B heterodimers. Interacts with H2AB1; preferentially dimerizes with H2AB1 to form nucleosomes. In terms of processing, monoubiquitination at Lys-36 by the MSL1/MSL2 dimer is required for histone H3 'Lys-4' (H3K4me) and 'Lys-79' (H3K79me) methylation and transcription activation at specific gene loci, such as HOXA9 and MEIS1 loci. Similarly, monoubiquitination of Lys-122 (H2BK120Ub) by the RNF20/40 complex gives a specific tag for epigenetic transcriptional activation and is also prerequisite for histone H3 'Lys-4' and 'Lys-79' methylation. It also functions cooperatively with the FACT dimer to stimulate elongation by RNA polymerase II. H2BK120Ub also acts as a regulator of mRNA splicing: deubiquitination by USP49 is required for efficient cotranscriptional splicing of a large set of exons. Crotonylation (Kcr) is specifically present in male germ cells and marks testis-specific genes in post-meiotic cells, including X-linked genes that escape sex chromosome inactivation in haploid cells. Crotonylation marks active promoters and enhancers and confers resistance to transcriptional repressors. It is also associated with post-meiotically activated genes on autosomes. Post-translationally, acetylated during spermatogenesis. Acetylated form is most abundant in spermatogonia compared to spermatocytes and round spermatids. In terms of processing, phosphorylated at Thr-117 in spermatogonia, spermatocytes and round spermatids. Methylated at Lys-118 in spermatogonia, spermatocytes and round spermatids. Post-translationally, lactylated in macrophages by EP300/P300 by using lactoyl-CoA directly derived from endogenous or exogenous lactate, leading to stimulates gene transcription. As to expression, mainly expressed in testis, and the corresponding protein is also present in mature sperm. Also present in metaphase oocytes (at protein level).

The protein localises to the nucleus. It is found in the chromosome. Functionally, variant histone specifically required to direct the transformation of dissociating nucleosomes to protamine in male germ cells. Entirely replaces classical histone H2B prior nucleosome to protamine transition and probably acts as a nucleosome dissociating factor that creates a more dynamic chromatin, facilitating the large-scale exchange of histones. In condensing spermatids, the heterodimer between H2AB1 and H2BC1/TH2B is loaded onto the nucleosomes and promotes loading of transition proteins (TNP1 and TNP2) onto the nucleosomes. Inclusion of the H2AB1-H2BC1/TH2B dimer into chromatin opens the nucleosomes, releasing the nucleosomal DNA ends and allowing the invasion of nucleosomes by transition proteins (TNP1 and TNP2). Then, transition proteins drive the recruitment and processing of protamines, which are responsible for histone eviction. Also expressed maternally and is present in the female pronucleus, suggesting a similar role in protamine replacement by nucleosomes at fertilization. Core component of nucleosome. Nucleosomes wrap and compact DNA into chromatin, limiting DNA accessibility to the cellular machineries which require DNA as a template. Histones thereby play a central role in transcription regulation, DNA repair, DNA replication and chromosomal stability. DNA accessibility is regulated via a complex set of post-translational modifications of histones, also called histone code, and nucleosome remodeling. The protein is Histone H2B type 1-A of Mus musculus (Mouse).